A 116-amino-acid polypeptide reads, in one-letter code: Large ribosomal subunit protein uL18 (116 aa).

This sequence belongs to the universal ribosomal protein uL18 family. As to quaternary structure, part of the 50S ribosomal subunit; part of the 5S rRNA/L5/L18/L25 subcomplex. Contacts the 5S and 23S rRNAs.

Functionally, this is one of the proteins that bind and probably mediate the attachment of the 5S RNA into the large ribosomal subunit, where it forms part of the central protuberance. This Shewanella amazonensis (strain ATCC BAA-1098 / SB2B) protein is Large ribosomal subunit protein uL18.